Reading from the N-terminus, the 233-residue chain is MKTCITKGIVTVSLTAILLSCSSTWAAGKGGVGLAATRLVYSEGEEQISLGVRNTSPDVPYLIQSWVMTPDNKKSADFIITPPLFVLNPANENLLRIMYIGAPLAKDRETLFFTSVRAVPSTTKREEGNTLKIATQSVIKLFWRPKGLAYPLGEAPAKLRCTSSADMVTVSNPTPYFITLTDLKIGGKLVKNQMISPFDKYQFSLPKGAKNSSVTYRTINDYGAETPQLNCKS.

An N-terminal signal peptide occupies residues 1–26 (MKTCITKGIVTVSLTAILLSCSSTWA).

It belongs to the periplasmic pilus chaperone family.

It is found in the periplasm. In terms of biological role, part of the elfADCG fimbrial operon, which could be required for adherence to host epithelial cells. Could be required for the biogenesis of the ElfA fimbriae. In Escherichia coli O157:H7, this protein is Probable fimbrial chaperone protein ElfD (elfD).